A 408-amino-acid polypeptide reads, in one-letter code: LL-diaminopimelate aminotransferase (408 aa).

Substrate-binding residues include Tyr15 and Gly42. Residues Tyr72, 108–109, Tyr132, Asn187, Tyr218, and 246–248 each bind pyridoxal 5'-phosphate; these read SK and SFS. The substrate site is built by Lys109, Tyr132, and Asn187. Lys249 bears the N6-(pyridoxal phosphate)lysine mark. Residues Arg257 and Asn292 each contribute to the pyridoxal 5'-phosphate site. Asn292 and Arg388 together coordinate substrate.

This sequence belongs to the class-I pyridoxal-phosphate-dependent aminotransferase family. LL-diaminopimelate aminotransferase subfamily. Homodimer. Pyridoxal 5'-phosphate is required as a cofactor.

The enzyme catalyses (2S,6S)-2,6-diaminopimelate + 2-oxoglutarate = (S)-2,3,4,5-tetrahydrodipicolinate + L-glutamate + H2O + H(+). It functions in the pathway amino-acid biosynthesis; L-lysine biosynthesis via DAP pathway; LL-2,6-diaminopimelate from (S)-tetrahydrodipicolinate (aminotransferase route): step 1/1. Its function is as follows. Involved in the synthesis of meso-diaminopimelate (m-DAP or DL-DAP), required for both lysine and peptidoglycan biosynthesis. Catalyzes the direct conversion of tetrahydrodipicolinate to LL-diaminopimelate. In Parasynechococcus marenigrum (strain WH8102), this protein is LL-diaminopimelate aminotransferase.